The following is a 603-amino-acid chain: Elongation factor 4 (603 aa).

In terms of domain architecture, tr-type G spans 2–184; sequence NHIRNFSIIA…AVIARVPPPK (183 aa). Residues 14–19 and 131–134 contribute to the GTP site; these read DHGKST and NKMD.

Belongs to the TRAFAC class translation factor GTPase superfamily. Classic translation factor GTPase family. LepA subfamily.

It localises to the cell inner membrane. The catalysed reaction is GTP + H2O = GDP + phosphate + H(+). In terms of biological role, required for accurate and efficient protein synthesis under certain stress conditions. May act as a fidelity factor of the translation reaction, by catalyzing a one-codon backward translocation of tRNAs on improperly translocated ribosomes. Back-translocation proceeds from a post-translocation (POST) complex to a pre-translocation (PRE) complex, thus giving elongation factor G a second chance to translocate the tRNAs correctly. Binds to ribosomes in a GTP-dependent manner. This chain is Elongation factor 4, found in Polaromonas sp. (strain JS666 / ATCC BAA-500).